We begin with the raw amino-acid sequence, 67 residues long: Neurotoxin Cex10 (67 aa).

The LCN-type CS-alpha/beta domain maps to Lys1–Gly65. 4 disulfide bridges follow: Cys11–Cys64, Cys15–Cys40, Cys24–Cys45, and Cys28–Cys47. The residue at position 64 (Cys64) is a Cysteine amide. The propeptide occupies Gly65–Lys67.

Belongs to the long (4 C-C) scorpion toxin superfamily. Sodium channel inhibitor family. Beta subfamily. Expressed by the venom gland.

It is found in the secreted. In terms of biological role, beta toxins bind voltage-independently at site-4 of sodium channels (Nav) and shift the voltage of activation toward more negative potentials thereby affecting sodium channel activation and promoting spontaneous and repetitive firing. This Centruroides exilicauda (Bark scorpion) protein is Neurotoxin Cex10.